We begin with the raw amino-acid sequence, 240 residues long: Aquaporin Z (240 aa).

A run of 2 helical transmembrane segments spans residues 10–30 (AIGT…AAGF) and 35–55 (IGLV…AYAI). Positions 64–66 (NPA) match the NPA 1 motif. 3 helical membrane passes run 82 to 102 (ILPY…LLYI), 131 to 151 (MMAC…IIMG), and 160 to 180 (GFAP…SIPV). The NPA 2 signature appears at 186–188 (NPA). The helical transmembrane segment at 194 to 214 (ALFVGGWAMAQLWLFWVAPLI) threads the bilayer.

This sequence belongs to the MIP/aquaporin (TC 1.A.8) family. As to quaternary structure, homotetramer.

Its subcellular location is the cell inner membrane. The enzyme catalyses H2O(in) = H2O(out). Functionally, channel that permits osmotically driven movement of water in both directions. It is involved in the osmoregulation and in the maintenance of cell turgor during volume expansion in rapidly growing cells. It mediates rapid entry or exit of water in response to abrupt changes in osmolarity. The sequence is that of Aquaporin Z from Bradyrhizobium diazoefficiens (strain JCM 10833 / BCRC 13528 / IAM 13628 / NBRC 14792 / USDA 110).